We begin with the raw amino-acid sequence, 1026 residues long: Contactin-4 (1026 aa).

The first 18 residues, 1-18, serve as a signal peptide directing secretion; the sequence is MRLPWELLVLQSFMLCLA. 6 consecutive Ig-like C2-type domains span residues 32 to 117, 122 to 206, 225 to 311, 316 to 400, 406 to 493, and 497 to 586; these read PSHV…AKLQ, ENFK…HQVL, PKIE…GQVT, PNWV…AELS, PDFS…GNVV, and PTKV…DKLS. Disulfide bonds link Cys-50-Cys-100, Cys-144-Cys-194, Cys-247-Cys-295, Cys-337-Cys-384, Cys-429-Cys-477, and Cys-519-Cys-576. 3 N-linked (GlcNAc...) asparagine glycosylation sites follow: Asn-65, Asn-90, and Asn-191. N-linked (GlcNAc...) asparagine glycans are attached at residues Asn-370, Asn-375, and Asn-466. Fibronectin type-III domains follow at residues 599 to 697, 702 to 799, 804 to 899, and 900 to 995; these read PPEA…TEEA, TPAN…SAEE, PPAS…TRKP, and PPSQ…ISNS. The segment at 685-710 is disordered; the sequence is PSRPSEKRRTEEALPEVTPANVSGGG. The segment covering 687-696 has biased composition (basic and acidic residues); the sequence is RPSEKRRTEE. Asn-705, Asn-764, Asn-858, Asn-893, Asn-911, Asn-929, and Asn-954 each carry an N-linked (GlcNAc...) asparagine glycan. Ser-1000 carries the GPI-anchor amidated serine lipid modification. Positions 1001–1026 are cleaved as a propeptide — removed in mature form; it reads GASTSNACTLSAISTIMISLTARSSL.

The protein belongs to the immunoglobulin superfamily. Contactin family. In terms of assembly, interacts with PTPRG. As to expression, specifically expressed in the nervous system. Not expressed in heart, spleen, lung, liver, kidney or skeletal muscle. In the hippocampus, it is highly expressed in CA1 pyramidal cells and weakly expressed in other regions of the hippocampus.

It is found in the cell membrane. Its subcellular location is the secreted. In terms of biological role, contactins mediate cell surface interactions during nervous system development. Has some neurite outgrowth-promoting activity. May be involved in synaptogenesis. This is Contactin-4 (Cntn4) from Rattus norvegicus (Rat).